The primary structure comprises 127 residues: MPSCDPGPAPACLPTKTFRSYLPRCHRTYSCVHCRAHLAKHDELISKSFQGSHGRAYLFNSVVNVGCGPAEQRLLLTGLHSVADIFCESCKTTLGWKYEQAFETSQKYKEGKYIIEMSHMVKDNGWD.

One can recognise a Yippee domain in the interval 27 to 124; that stretch reads RTYSCVHCRA…IEMSHMVKDN (98 aa). Zn(2+) contacts are provided by Cys31, Cys34, Cys87, and Cys90. A phosphothreonine mark is found at Thr92 and Thr93. Position 98 is a phosphotyrosine (Tyr98).

The protein belongs to the yippee family. Detected in brain, spleen and testis.

The protein resides in the nucleus. The protein localises to the nucleolus. This Mus musculus (Mouse) protein is Protein yippee-like 4 (Ypel4).